Reading from the N-terminus, the 62-residue chain is Large ribosomal subunit protein uL30 (62 aa).

The protein belongs to the universal ribosomal protein uL30 family. Part of the 50S ribosomal subunit.

The sequence is that of Large ribosomal subunit protein uL30 from Geobacillus thermodenitrificans (strain NG80-2).